Here is a 158-residue protein sequence, read N- to C-terminus: 6,7-dimethyl-8-ribityllumazine synthase (158 aa).

Residues phenylalanine 23, 57 to 59, and 81 to 83 each bind 5-amino-6-(D-ribitylamino)uracil; these read AFE and TVI. Position 86 to 87 (86 to 87) interacts with (2S)-2-hydroxy-3-oxobutyl phosphate; sequence GT. The active-site Proton donor is histidine 89. Phenylalanine 114 lines the 5-amino-6-(D-ribitylamino)uracil pocket. Residue arginine 128 participates in (2S)-2-hydroxy-3-oxobutyl phosphate binding.

The protein belongs to the DMRL synthase family.

It catalyses the reaction (2S)-2-hydroxy-3-oxobutyl phosphate + 5-amino-6-(D-ribitylamino)uracil = 6,7-dimethyl-8-(1-D-ribityl)lumazine + phosphate + 2 H2O + H(+). It functions in the pathway cofactor biosynthesis; riboflavin biosynthesis; riboflavin from 2-hydroxy-3-oxobutyl phosphate and 5-amino-6-(D-ribitylamino)uracil: step 1/2. Its function is as follows. Catalyzes the formation of 6,7-dimethyl-8-ribityllumazine by condensation of 5-amino-6-(D-ribitylamino)uracil with 3,4-dihydroxy-2-butanone 4-phosphate. This is the penultimate step in the biosynthesis of riboflavin. The protein is 6,7-dimethyl-8-ribityllumazine synthase of Desulforudis audaxviator (strain MP104C).